Reading from the N-terminus, the 370-residue chain is MAEERQDALREFVAVTGTEEDRARFFLESAGWDLQIALASFYEDGGDEDIVTISQATPSSVSRGTAPSDNRVTSFRDLIHDQDEEEEEEEGQRFYAGGSERSGQQIVGPPRKKSPNELVDDLFKGAKEHGAVAVERVTKSPGETSKPRPFAGGGYRLGAAPEEESAYVAGERRRHSGQDVHVVLKLWKTGFSLDNGDLRSYQDPSNAQFLESIRRGEVPAELRRLAHGGQVNLDMEDHRDEDFVKPKGAFKAFTGEGQKLGSTAPQVLNTSSPAQQAENEAKASSSILINEAEPTTNIQIRLADGGRLVQKFNHSHRISDIRLFIVDARPAMAATSFVLMTTFPNKELADENQTLKEANLLNAVIVQRLT.

The segment at Ser54–Thr73 is disordered. A phosphoserine mark is found at Ser74, Ser102, Ser114, and Ser140. Disordered regions lie at residues His80–Asn116 and Thr138–Leu157. The Nuclear localization signal motif lies at Pro109–Pro115. Residue Tyr167 is modified to Phosphotyrosine. The Nuclear localization signal signature appears at Arg172 to His175. Phosphoserine occurs at positions 176, 192, and 272. The 66-residue stretch at Asp179–Val244 folds into the SEP domain. Residues Glu291–Arg368 form the UBX domain.

Belongs to the NSFL1C family. Part of a ternary complex containing STX5A, NSFL1C and VCP. NSFL1C forms a homotrimer that binds to one end of a VCP homohexamer. The complex binds to membranes enriched in phosphatidylethanolamine-containing lipids and promotes Golgi membrane fusion. Interaction with VCIP135 leads to dissociation of the complex via ATP hydrolysis by VCP. Binds ubiquitin and mono-ubiquitinated proteins via its N-terminal UBA-like domain when bound to VCP. Post-translationally, phosphorylated during mitosis. Phosphorylation inhibits interaction with Golgi membranes and is required for the fragmentation of the Golgi stacks during mitosis.

The protein resides in the nucleus. It is found in the golgi apparatus. Its subcellular location is the golgi stack. It localises to the chromosome. The protein localises to the cytoplasm. The protein resides in the cytoskeleton. It is found in the microtubule organizing center. Its subcellular location is the centrosome. Its function is as follows. Reduces the ATPase activity of VCP. Necessary for the fragmentation of Golgi stacks during mitosis and for VCP-mediated reassembly of Golgi stacks after mitosis. May play a role in VCP-mediated formation of transitional endoplasmic reticulum (tER). Inhibits the activity of CTSL (in vitro). Together with UBXN2B/p37, regulates the centrosomal levels of kinase AURKA/Aurora A during mitotic progression by promoting AURKA removal from centrosomes in prophase. Also, regulates spindle orientation during mitosis. The chain is NSFL1 cofactor p47 (Nsfl1c) from Mus musculus (Mouse).